A 71-amino-acid chain; its full sequence is uncharacterized protein (71 aa).

A compositionally biased stretch (basic residues) spans methionine 1 to lysine 10. The disordered stretch occupies residues methionine 1–asparagine 20. A helical transmembrane segment spans residues leucine 21–isoleucine 43.

The protein resides in the membrane. This is an uncharacterized protein from Saccharomyces cerevisiae (strain ATCC 204508 / S288c) (Baker's yeast).